The sequence spans 471 residues: MTFRLYDTATREVRDFVPLEEGKAGLYVCGLTVQSEPHVGHVRSGVNFDVLQRWLRHLGYDVTFIRNVTDIDDKILVKSAEQGLAWYQLAYRMKRQLDRAYDDLNVAPPTYEPAATGHVPEMIVLIQELIAKGHAYAAEDGSGDVYFDVRSWPQYGELTRQGIDDMEAAEDADPRGKRDPRDFALWKGWKKDSEPETAAWPSPWGPGRPGWHIECSAMAGKYLGPAFDIHGGGVDLRFPHHENEQAQSRAAGRPFATYWMHNAWITTAGEKMSKSLGNSLTIPAVLQKYRGIELRYYLVAAHYRSHVEFSFEALDEAATGFRRIENFLDRAADVLGGIGGGIACADFLNAMNDDLGTPAAVAAIHEVVREGNKLLAAGDSPALRGNAASVVAMLDVLGLDPADPAWSSPGGGRTAERLETVVEGLVSDLLTQREKARADRDFVSADAIRDRLHAVGVQLEDTPDGPKWSLS.

Zn(2+) is bound at residue Cys29. Positions 31 to 41 match the 'HIGH' region motif; sequence LTVQSEPHVGH. Zn(2+) is bound by residues Cys215, His240, and Glu244. The 'KMSKS' region signature appears at 271 to 275; sequence KMSKS. Residue Lys274 coordinates ATP.

This sequence belongs to the class-I aminoacyl-tRNA synthetase family. As to quaternary structure, monomer. Zn(2+) is required as a cofactor.

It is found in the cytoplasm. The enzyme catalyses tRNA(Cys) + L-cysteine + ATP = L-cysteinyl-tRNA(Cys) + AMP + diphosphate. In Nocardioides sp. (strain ATCC BAA-499 / JS614), this protein is Cysteine--tRNA ligase.